The primary structure comprises 292 residues: Protease HtpX homolog (292 aa).

2 consecutive transmembrane segments (helical) span residues 7–27 and 29–49; these read TFIL…LIGG and GGAV…WWNS. His-131 lines the Zn(2+) pocket. Glu-132 is a catalytic residue. His-135 lines the Zn(2+) pocket. 2 helical membrane passes run 148–168 and 178–198; these read ATMA…SMFG and LAAI…QMAI. Glu-203 is a binding site for Zn(2+).

This sequence belongs to the peptidase M48B family. Zn(2+) is required as a cofactor.

Its subcellular location is the cell inner membrane. The chain is Protease HtpX homolog from Paracoccus denitrificans (strain Pd 1222).